Consider the following 207-residue polypeptide: Proteasome subunit beta 2 (207 aa).

Positions 1-10 are cleaved as a propeptide — removed in mature form; by autocatalysis; that stretch reads MLQLTEKFKG. The active-site Nucleophile is the T11.

This sequence belongs to the peptidase T1B family. As to quaternary structure, the 20S proteasome core is composed of 14 alpha and 14 beta subunits that assemble into four stacked heptameric rings, resulting in a barrel-shaped structure. The two inner rings, each composed of seven catalytic beta subunits, are sandwiched by two outer rings, each composed of seven alpha subunits. The catalytic chamber with the active sites is on the inside of the barrel. Has a gated structure, the ends of the cylinder being occluded by the N-termini of the alpha-subunits. Is capped at one or both ends by the proteasome regulatory ATPase, PAN.

Its subcellular location is the cytoplasm. It carries out the reaction Cleavage of peptide bonds with very broad specificity.. With respect to regulation, the formation of the proteasomal ATPase PAN-20S proteasome complex, via the docking of the C-termini of PAN into the intersubunit pockets in the alpha-rings, triggers opening of the gate for substrate entry. Interconversion between the open-gate and close-gate conformations leads to a dynamic regulation of the 20S proteasome proteolysis activity. Its function is as follows. Component of the proteasome core, a large protease complex with broad specificity involved in protein degradation. This Pyrococcus abyssi (strain GE5 / Orsay) protein is Proteasome subunit beta 2.